Reading from the N-terminus, the 96-residue chain is Co-chaperonin GroES (96 aa).

The protein belongs to the GroES chaperonin family. As to quaternary structure, heptamer of 7 subunits arranged in a ring. Interacts with the chaperonin GroEL.

Its subcellular location is the cytoplasm. In terms of biological role, together with the chaperonin GroEL, plays an essential role in assisting protein folding. The GroEL-GroES system forms a nano-cage that allows encapsulation of the non-native substrate proteins and provides a physical environment optimized to promote and accelerate protein folding. GroES binds to the apical surface of the GroEL ring, thereby capping the opening of the GroEL channel. The chain is Co-chaperonin GroES from Halorhodospira halophila (strain DSM 244 / SL1) (Ectothiorhodospira halophila (strain DSM 244 / SL1)).